The primary structure comprises 673 residues: Cell division cycle protein 23 homolog (673 aa).

10 TPR repeats span residues 86–120, 159–195, 232–267, 332–365, 400–433, 434–467, 469–501, 502–535, 539–572, and 577–610; these read AEMWTNEILAHLPDKWCAPNTLNLYNQVSELVLDN, NKEFRRAAFFLEKTMNGNKLDHFLHFRCLFLAYYQEH, EDVWFEYLMGLLEVELGLKDLAEKSFRNVVIREPRI, PMIITKIAACSNARHDHDQAISNFEDVRKADPYR, WETCCIVANYHAIRRDSEHAIKFFQRALRLNPGL, AALWVLIGHEFMEMKNNAAACVSYRRAIEIDPAD, RGWYGLGQMYDIMKMPAYALFYYQEAQKCKPHD, SRLLVALGDIYSKLNRIEDAEKCFTGAYLFGDVE, LWSLAKLHERYSDDNKAAQAFEVFLVVYELVTSA, and IYAIAFLANHFFKIEDFDKASEYATKCLAFETLC. Residues 628–673 are disordered; it reads SRLPVEEAPGPSNASAAGGQEAMDTEEAPQEGGEEEMSEGEDDFSF. A compositionally biased stretch (low complexity) spans 635–646; it reads APGPSNASAAGG. Over residues 650-673 the composition is skewed to acidic residues; sequence MDTEEAPQEGGEEEMSEGEDDFSF.

This sequence belongs to the APC8/CDC23 family. As to quaternary structure, the APC/C complex is probably composed of at least 12 subunits: apc-2, apc-10, apc-11, cdc-26, emb-1, emb-27, emb-30, mat-1, mat-2, mat-3, such-1 and gfi-3.

It functions in the pathway protein modification; protein ubiquitination. Probable component of the anaphase promoting complex/cyclosome (APC/C), a cell cycle-regulated E3 ubiquitin ligase that controls progression through mitosis and the G1 phase of the cell cycle. The APC/C complex acts by mediating ubiquitination and subsequent degradation of target proteins. Developmental role in early embryogenesis and the metaphase to anaphase transition in oocyte and spermatocyte meiosis and mitosis in germ cells. Required for embryonic anterior-posterior axis formation. Plays a role in regulating the abundance of glr-1 receptors in postmitotic neurons, which may in turn control animal locomotion. Involved in regulating GABA neurotransmitter release at neuromuscular junctions in GABA motor neurons. This chain is Cell division cycle protein 23 homolog, found in Caenorhabditis elegans.